The primary structure comprises 493 residues: Ketol-acid reductoisomerase (NADP(+)) (493 aa).

Residues A15–S208 form the KARI N-terminal Rossmann domain. NADP(+) is bound by residues C45–Q48, R68, R76, S78, and D108–Q110. The active site involves H132. G158 is a binding site for NADP(+). KARI C-terminal knotted domains follow at residues S209 to A344 and F345 to M486. 4 residues coordinate Mg(2+): D217, E221, E389, and E393. Substrate is bound at residue S414.

It belongs to the ketol-acid reductoisomerase family. Requires Mg(2+) as cofactor.

The enzyme catalyses (2R)-2,3-dihydroxy-3-methylbutanoate + NADP(+) = (2S)-2-acetolactate + NADPH + H(+). The catalysed reaction is (2R,3R)-2,3-dihydroxy-3-methylpentanoate + NADP(+) = (S)-2-ethyl-2-hydroxy-3-oxobutanoate + NADPH + H(+). It functions in the pathway amino-acid biosynthesis; L-isoleucine biosynthesis; L-isoleucine from 2-oxobutanoate: step 2/4. The protein operates within amino-acid biosynthesis; L-valine biosynthesis; L-valine from pyruvate: step 2/4. Its function is as follows. Involved in the biosynthesis of branched-chain amino acids (BCAA). Catalyzes an alkyl-migration followed by a ketol-acid reduction of (S)-2-acetolactate (S2AL) to yield (R)-2,3-dihydroxy-isovalerate. In the isomerase reaction, S2AL is rearranged via a Mg-dependent methyl migration to produce 3-hydroxy-3-methyl-2-ketobutyrate (HMKB). In the reductase reaction, this 2-ketoacid undergoes a metal-dependent reduction by NADPH to yield (R)-2,3-dihydroxy-isovalerate. This chain is Ketol-acid reductoisomerase (NADP(+)), found in Aeromonas salmonicida (strain A449).